The sequence spans 1176 residues: Nitrite reductase [NAD(P)H] (1176 aa).

Positions 1-23 are disordered; sequence MANTSLDMASSTSPSPSPESTTT. Low complexity predominate over residues 10-23; sequence SSTSPSPSPESTTT. 26 to 60 provides a ligand contact to FAD; that stretch reads KRIVVVGLGMVGIAFIEKLIKLDTQRQYEIVVIGE. 183–215 provides a ligand contact to NAD(+); the sequence is STGVVVGGGLLGLEAAKALMDLQVFGRVVVIER. [2Fe-2S] cluster contacts are provided by cysteine 496, cysteine 498, cysteine 531, and cysteine 534. The [4Fe-4S] cluster site is built by cysteine 717, cysteine 723, cysteine 757, and cysteine 761. Cysteine 761 is a binding site for siroheme. One can recognise a Rieske; atypical domain in the interval 942-1094; sequence SYFQGADDLP…VEERDDGMVY (153 aa). [2Fe-2S] cluster contacts are provided by cysteine 981 and histidine 983. Composition is skewed to low complexity over residues 998 to 1008 and 1030 to 1049; these read PSPSSCSSSAL and PTSSATPATTASSSCTTNPS. Positions 998-1051 are disordered; that stretch reads PSPSSCSSSALPPSPPSTPPRSSSPVTSPPQSPTSSATPATTASSSCTTNPSGP. Residues cysteine 1058 and histidine 1061 each coordinate [2Fe-2S] cluster. Over residues 1124–1139 the composition is skewed to basic and acidic residues; that stretch reads LRELDELNKSKGVEGK. Positions 1124–1157 are disordered; that stretch reads LRELDELNKSKGVEGKKGRRGRKPGASEAGKEVG.

Belongs to the nitrite and sulfite reductase 4Fe-4S domain family. In terms of assembly, homodimer. It depends on siroheme as a cofactor. [4Fe-4S] cluster serves as cofactor. The cofactor is FAD. Requires [2Fe-2S] cluster as cofactor.

It catalyses the reaction NH4(+) + 3 NADP(+) + 2 H2O = nitrite + 3 NADPH + 5 H(+). It carries out the reaction NH4(+) + 3 NAD(+) + 2 H2O = nitrite + 3 NADH + 5 H(+). It functions in the pathway nitrogen metabolism; nitrate reduction (assimilation). The sequence is that of Nitrite reductase [NAD(P)H] (nit-6) from Neurospora crassa (strain ATCC 24698 / 74-OR23-1A / CBS 708.71 / DSM 1257 / FGSC 987).